The primary structure comprises 429 residues: UDP-N-acetylglucosamine 1-carboxyvinyltransferase (429 aa).

A phosphoenolpyruvate-binding site is contributed by 22–23 (KN). A UDP-N-acetyl-alpha-D-glucosamine-binding site is contributed by R102. Catalysis depends on C126, which acts as the Proton donor. At C126 the chain carries 2-(S-cysteinyl)pyruvic acid O-phosphothioketal. UDP-N-acetyl-alpha-D-glucosamine-binding positions include 131 to 135 (RPVDL), D316, and I338.

It belongs to the EPSP synthase family. MurA subfamily.

The protein localises to the cytoplasm. It carries out the reaction phosphoenolpyruvate + UDP-N-acetyl-alpha-D-glucosamine = UDP-N-acetyl-3-O-(1-carboxyvinyl)-alpha-D-glucosamine + phosphate. It functions in the pathway cell wall biogenesis; peptidoglycan biosynthesis. In terms of biological role, cell wall formation. Adds enolpyruvyl to UDP-N-acetylglucosamine. The sequence is that of UDP-N-acetylglucosamine 1-carboxyvinyltransferase from Methylorubrum populi (strain ATCC BAA-705 / NCIMB 13946 / BJ001) (Methylobacterium populi).